We begin with the raw amino-acid sequence, 167 residues long: CGG triplet repeat-binding protein 1 (167 aa).

A Phosphoserine modification is found at Ser-56. The segment at Lys-65–Leu-86 is disordered. The Nuclear localization signal motif lies at Arg-80 to Arg-84. Phosphoserine is present on Ser-164.

The protein resides in the nucleus. Functionally, binds to nonmethylated 5'-d(CGG)(n)-3' trinucleotide repeats in the FMR1 promoter. May play a role in regulating FMR1 promoter. This Mus musculus (Mouse) protein is CGG triplet repeat-binding protein 1 (Cggbp1).